Here is a 327-residue protein sequence, read N- to C-terminus: Leucotoxin LukD (327 aa).

An N-terminal signal peptide occupies residues 1 to 26 (MKIEKLGKSSVASSIALLLLSNTVDA).

Belongs to the aerolysin family. Toxicity requires sequential binding and synergistic association of a class S and a class F component which form heterooligomeric complexes. LukE (class S) associates with LukD (class F). LukD can also associate with HlgA.

Its subcellular location is the secreted. Its function is as follows. Part of a bi-component leucotoxin that acts by forming pores in the membrane of the target cells. LukE-LukD is as effective as the Panton-Valentine leucocidin (PVL) for inducing dermonecrosis when injected in the rabbit skin, but not hemolytic and poorly leucotoxic on human blood cells compared to other leucotoxins expressed by S.aureus. HlgA-LukD is a Ca(2+) channel inducer. This Staphylococcus aureus protein is Leucotoxin LukD (lukD).